Consider the following 288-residue polypeptide: Pantothenate synthetase (288 aa).

Residue 30-37 (MGFLHEGH) participates in ATP binding. The active-site Proton donor is the His-37. Residue Gln-61 coordinates (R)-pantoate. Gln-61 serves as a coordination point for beta-alanine. 147 to 150 (GMKD) is a binding site for ATP. Gln-153 is a binding site for (R)-pantoate. Residue 184–187 (KSSR) coordinates ATP.

Belongs to the pantothenate synthetase family. As to quaternary structure, homodimer.

It is found in the cytoplasm. The catalysed reaction is (R)-pantoate + beta-alanine + ATP = (R)-pantothenate + AMP + diphosphate + H(+). Its pathway is cofactor biosynthesis; (R)-pantothenate biosynthesis; (R)-pantothenate from (R)-pantoate and beta-alanine: step 1/1. In terms of biological role, catalyzes the condensation of pantoate with beta-alanine in an ATP-dependent reaction via a pantoyl-adenylate intermediate. The polypeptide is Pantothenate synthetase (Bacillus licheniformis (strain ATCC 14580 / DSM 13 / JCM 2505 / CCUG 7422 / NBRC 12200 / NCIMB 9375 / NCTC 10341 / NRRL NRS-1264 / Gibson 46)).